A 564-amino-acid polypeptide reads, in one-letter code: Isocitrate dehydrogenase kinase/phosphatase (564 aa).

Residues 315–321 (APGVKGM) and Lys336 each bind ATP. Residue Asp371 is part of the active site.

It belongs to the AceK family.

The protein resides in the cytoplasm. The enzyme catalyses L-seryl-[isocitrate dehydrogenase] + ATP = O-phospho-L-seryl-[isocitrate dehydrogenase] + ADP + H(+). Its function is as follows. Bifunctional enzyme which can phosphorylate or dephosphorylate isocitrate dehydrogenase (IDH) on a specific serine residue. This is a regulatory mechanism which enables bacteria to bypass the Krebs cycle via the glyoxylate shunt in response to the source of carbon. When bacteria are grown on glucose, IDH is fully active and unphosphorylated, but when grown on acetate or ethanol, the activity of IDH declines drastically concomitant with its phosphorylation. In Idiomarina loihiensis (strain ATCC BAA-735 / DSM 15497 / L2-TR), this protein is Isocitrate dehydrogenase kinase/phosphatase.